The sequence spans 407 residues: Tryptophan synthase beta chain (407 aa).

N6-(pyridoxal phosphate)lysine is present on K91.

It belongs to the TrpB family. As to quaternary structure, tetramer of two alpha and two beta chains. Requires pyridoxal 5'-phosphate as cofactor.

It catalyses the reaction (1S,2R)-1-C-(indol-3-yl)glycerol 3-phosphate + L-serine = D-glyceraldehyde 3-phosphate + L-tryptophan + H2O. Its pathway is amino-acid biosynthesis; L-tryptophan biosynthesis; L-tryptophan from chorismate: step 5/5. Its function is as follows. The beta subunit is responsible for the synthesis of L-tryptophan from indole and L-serine. This Streptococcus pneumoniae (strain 70585) protein is Tryptophan synthase beta chain.